A 49-amino-acid chain; its full sequence is Osteocalcin (49 aa).

Positions 1 to 47 (YLDHGLGAPAPYPDPLEPRREVCELNPDCDELADHIGFQEAYRRFYG) constitute a Gla domain. The residue at position 9 (proline 9) is a Hydroxyproline. Residues glutamate 17, glutamate 21, glutamate 24, and aspartate 30 each contribute to the Ca(2+) site. A 4-carboxyglutamate mark is found at glutamate 17, glutamate 21, and glutamate 24. Cysteine 23 and cysteine 29 are joined by a disulfide.

It belongs to the osteocalcin/matrix Gla protein family. Gamma-carboxyglutamate residues are formed by vitamin K dependent carboxylation by GGCX. These residues are essential for the binding of calcium. Decarboxylation promotes the hormone activity.

It is found in the secreted. Functionally, the carboxylated form is one of the main organic components of the bone matrix, which constitutes 1-2% of the total bone protein. It acts as a negative regulator of bone formation and is required to limit bone formation without impairing bone resorption or mineralization. The carboxylated form binds strongly to apatite and calcium. In terms of biological role, the uncarboxylated form acts as a hormone secreted by osteoblasts, which regulates different cellular processes, such as energy metabolism, male fertility and brain development. Regulates of energy metabolism by acting as a hormone favoring pancreatic beta-cell proliferation, insulin secretion and sensitivity and energy expenditure. Uncarboxylated osteocalcin hormone also promotes testosterone production in the testes: acts as a ligand for G protein-coupled receptor GPRC6A at the surface of Leydig cells, initiating a signaling response that promotes the expression of enzymes required for testosterone synthesis in a CREB-dependent manner. Also acts as a regulator of brain development: osteocalcin hormone crosses the blood-brain barrier and acts as a ligand for GPR158 on neurons, initiating a signaling response that prevents neuronal apoptosis in the hippocampus, favors the synthesis of all monoamine neurotransmitters and inhibits that of gamma-aminobutyric acid (GABA). Osteocalcin also crosses the placenta during pregnancy and maternal osteocalcin is required for fetal brain development. This Sus scrofa (Pig) protein is Osteocalcin (BGLAP).